The sequence spans 278 residues: UPF0276 protein Swit_4400 (278 aa).

This sequence belongs to the UPF0276 family.

The sequence is that of UPF0276 protein Swit_4400 from Rhizorhabdus wittichii (strain DSM 6014 / CCUG 31198 / JCM 15750 / NBRC 105917 / EY 4224 / RW1) (Sphingomonas wittichii).